The chain runs to 105 residues: Large ribosomal subunit protein bL21 (105 aa).

This sequence belongs to the bacterial ribosomal protein bL21 family. Part of the 50S ribosomal subunit. Contacts protein L20.

Functionally, this protein binds to 23S rRNA in the presence of protein L20. The protein is Large ribosomal subunit protein bL21 of Methylobacterium nodulans (strain LMG 21967 / CNCM I-2342 / ORS 2060).